Consider the following 333-residue polypeptide: AQTTAPSVYPLAPGCGDTTSSTVTLGCLVKGYFPEPVTVTWNSGALSSDVHTFPAVLQSGLYTLTSSVTSSTWPSQTVTCNVAHPASSTKVDKKVERRNGGIGHKCPTCPTCHKCPVPELLGGPSVFIFPPKPKDILLISQNAKVTCVVVDVSEEEPDVQFSWFVNNVEVHTAQTQPREEQYNSTFRVVSALPIQHQDWMSGKEFKCKVNNKALPSPIEKTISKPKGLVRKPQVYVMGPPTEQLTEQTVSLTCLTSGFLPNDIGVEWTSNGHIEKNYKNTEPVMDSDGSFFMYSKLNVERSRWDSRAPFVCSVVHEGLHNHHVEKSISRPPGK.

3 Ig-like domains span residues 6-96 (PSVY…KKVE), 124-223 (PSVF…KTIS), and 232-328 (PQVY…KSIS). 3 disulfides stabilise this stretch: Cys27–Cys80, Cys147–Cys207, and Cys253–Cys311.

This chain is Ig gamma-2B chain C region (Igh-1a), found in Rattus norvegicus (Rat).